The primary structure comprises 135 residues: Probable histone H2A.7 (135 aa).

This sequence belongs to the histone H2A family. The nucleosome is a histone octamer containing two molecules each of H2A, H2B, H3 and H4 assembled in one H3-H4 heterotetramer and two H2A-H2B heterodimers. The octamer wraps approximately 147 bp of DNA.

Its subcellular location is the nucleus. The protein resides in the chromosome. Functionally, core component of nucleosome. Nucleosomes wrap and compact DNA into chromatin, limiting DNA accessibility to the cellular machineries which require DNA as a template. Histones thereby play a central role in transcription regulation, DNA repair, DNA replication and chromosomal stability. DNA accessibility is regulated via a complex set of post-translational modifications of histones, also called histone code, and nucleosome remodeling. The sequence is that of Probable histone H2A.7 from Oryza sativa subsp. indica (Rice).